A 272-amino-acid polypeptide reads, in one-letter code: Phytolongin Phyl2.2 (272 aa).

One can recognise a Longin domain in the interval 12–116 (CIAKGTVVLA…LINPVSHCLQ (105 aa)). The helical; Anchor for type IV membrane protein transmembrane segment at 243–263 (WVVLMFDFCICAVLFGIWLWI) threads the bilayer.

The protein belongs to the synaptobrevin family.

It is found in the membrane. In terms of biological role, non-SNARE longin protein involved in membrane-trafficking machinery. The protein is Phytolongin Phyl2.2 of Arabidopsis thaliana (Mouse-ear cress).